A 383-amino-acid chain; its full sequence is 4-hydroxy-3-methylbut-2-en-1-yl diphosphate synthase (flavodoxin) (383 aa).

Positions 275, 278, 310, and 317 each coordinate [4Fe-4S] cluster.

It belongs to the IspG family. [4Fe-4S] cluster serves as cofactor.

The catalysed reaction is (2E)-4-hydroxy-3-methylbut-2-enyl diphosphate + oxidized [flavodoxin] + H2O + 2 H(+) = 2-C-methyl-D-erythritol 2,4-cyclic diphosphate + reduced [flavodoxin]. It functions in the pathway isoprenoid biosynthesis; isopentenyl diphosphate biosynthesis via DXP pathway; isopentenyl diphosphate from 1-deoxy-D-xylulose 5-phosphate: step 5/6. Its function is as follows. Converts 2C-methyl-D-erythritol 2,4-cyclodiphosphate (ME-2,4cPP) into 1-hydroxy-2-methyl-2-(E)-butenyl 4-diphosphate. In Dinoroseobacter shibae (strain DSM 16493 / NCIMB 14021 / DFL 12), this protein is 4-hydroxy-3-methylbut-2-en-1-yl diphosphate synthase (flavodoxin).